The sequence spans 363 residues: Electron transfer flavoprotein subunit alpha, mitochondrial (363 aa).

Residues 1–24 (MTRTVLLRALTKNKFVASNAPRSI) constitute a mitochondrion transit peptide. 303-331 (LYMAFGVSGAIQHLAGIKDSKVIVAVNKD) is an FAD binding site.

Belongs to the ETF alpha-subunit/FixB family. As to quaternary structure, heterodimer of an alpha and a beta subunit. FAD is required as a cofactor.

The protein resides in the mitochondrion matrix. In terms of biological role, the electron transfer flavoprotein serves as a specific electron acceptor for several dehydrogenases, including five acyl-CoA dehydrogenases, glutaryl-CoA and sarcosine dehydrogenase. It transfers the electrons to the main mitochondrial respiratory chain via ETF-ubiquinone oxidoreductase (ETF dehydrogenase). Involved in leucine catabolism and in phytol degradation. This is Electron transfer flavoprotein subunit alpha, mitochondrial (ETFA) from Arabidopsis thaliana (Mouse-ear cress).